The primary structure comprises 153 residues: Large ribosomal subunit protein uL13 (153 aa).

The protein belongs to the universal ribosomal protein uL13 family. In terms of assembly, part of the 50S ribosomal subunit.

Its function is as follows. This protein is one of the early assembly proteins of the 50S ribosomal subunit, although it is not seen to bind rRNA by itself. It is important during the early stages of 50S assembly. In Methylobacterium nodulans (strain LMG 21967 / CNCM I-2342 / ORS 2060), this protein is Large ribosomal subunit protein uL13.